The following is a 670-amino-acid chain: Tyramine beta-hydroxylase (670 aa).

Basic residues predominate over residues 26 to 35 (HHQLAYHHHK). A disordered region spans residues 26 to 63 (HHQLAYHHHKQEQQQQQQQQQQQQAKQKQKQNGVQQGR). Low complexity predominate over residues 38–61 (QQQQQQQQQQQQAKQKQKQNGVQQ). A helical membrane pass occupies residues 65–81 (PTFMPVMLLLLMATLLT). The region spanning 104 to 220 (KEIKLSWMVD…GTMYVVWARG (117 aa)) is the DOMON domain. Asn-235 is a glycosylation site (N-linked (GlcNAc...) asparagine). Residue Tyr-281 is part of the active site. 2 disulfide bridges follow: Cys-283-Cys-334 and Cys-319-Cys-344. Cu(2+) is bound by residues His-312 and His-313. Positions 382, 461, 463, and 536 each coordinate Cu(2+). Cystine bridges form between Cys-439–Cys-552, Cys-443–Cys-613, and Cys-515–Cys-537. Residue His-461 is part of the active site. An N-linked (GlcNAc...) asparagine glycan is attached at Asn-614.

This sequence belongs to the copper type II ascorbate-dependent monooxygenase family. Is most likely a monomer under physiological conditions, although under conditions of high pH and low ionic strength the dimeric form predominates. Both forms are equally active. The cofactor is Cu(2+). In terms of tissue distribution, present in head and in neurons innervating the oviduct (at protein level).

Its subcellular location is the membrane. It carries out the reaction tyramine + L-ascorbate + O2 = (R)-octopamine + L-dehydroascorbate + H2O. In terms of biological role, catalyzes the hydroxylation of tyramine into octopamine, a neurotransmitter involved in ovulation and locomotion. Functions in an amine-mediated Bacc-dependent signaling pathway that negatively regulates acute ethanol sensitivity. Involved in facilitation of nociceptive escape behavior in response to potentially damaging stimuli, such as high temperatures. In Drosophila melanogaster (Fruit fly), this protein is Tyramine beta-hydroxylase (Tbh).